The sequence spans 64 residues: Small ribosomal subunit protein bS21 (64 aa).

It belongs to the bacterial ribosomal protein bS21 family.

The polypeptide is Small ribosomal subunit protein bS21 (Anaeromyxobacter dehalogenans (strain 2CP-1 / ATCC BAA-258)).